We begin with the raw amino-acid sequence, 178 residues long: Large ribosomal subunit protein uL6 (178 aa).

Belongs to the universal ribosomal protein uL6 family. As to quaternary structure, part of the 50S ribosomal subunit.

In terms of biological role, this protein binds to the 23S rRNA, and is important in its secondary structure. It is located near the subunit interface in the base of the L7/L12 stalk, and near the tRNA binding site of the peptidyltransferase center. This is Large ribosomal subunit protein uL6 from Bacillus licheniformis (strain ATCC 14580 / DSM 13 / JCM 2505 / CCUG 7422 / NBRC 12200 / NCIMB 9375 / NCTC 10341 / NRRL NRS-1264 / Gibson 46).